A 335-amino-acid chain; its full sequence is Trans-3-hydroxy-L-proline dehydratase (335 aa).

Catalysis depends on cysteine 91, which acts as the Proton acceptor. Residues 92–93 (GH), aspartate 251, and 256–257 (GS) contribute to the substrate site.

The protein belongs to the proline racemase family.

The catalysed reaction is trans-3-hydroxy-L-proline = 1-pyrroline-2-carboxylate + H2O. Functionally, catalyzes the dehydration of trans-3-hydroxy-L-proline (t3LHyp) to Delta(1)-pyrroline-2-carboxylate (Pyr2C). Is likely involved in a degradation pathway that converts t3LHyp to L-proline. Displays neither trans-4-hydroxy-L-proline (t4LHyp) epimerase nor proline racemase activity. The protein is Trans-3-hydroxy-L-proline dehydratase of Burkholderia ambifaria (strain ATCC BAA-244 / DSM 16087 / CCUG 44356 / LMG 19182 / AMMD) (Burkholderia cepacia (strain AMMD)).